The following is a 326-amino-acid chain: Putative ubiquitin-conjugating enzyme E2 38 (326 aa).

The UBC core domain maps to 54–214 (NWVKKVQDEW…VFLLSLKTMV (161 aa)). Catalysis depends on cysteine 140, which acts as the Glycyl thioester intermediate. The segment at 297 to 326 (LAEKPKPPVNNANTENQSKKKTRKRSRSSR) is disordered. Positions 315–326 (KKKTRKRSRSSR) are enriched in basic residues.

The protein belongs to the ubiquitin-conjugating enzyme family.

It catalyses the reaction S-ubiquitinyl-[E1 ubiquitin-activating enzyme]-L-cysteine + [E2 ubiquitin-conjugating enzyme]-L-cysteine = [E1 ubiquitin-activating enzyme]-L-cysteine + S-ubiquitinyl-[E2 ubiquitin-conjugating enzyme]-L-cysteine.. It participates in protein modification; protein ubiquitination. Its function is as follows. Accepts the ubiquitin from the E1 complex and catalyzes its covalent attachment to other proteins. This chain is Putative ubiquitin-conjugating enzyme E2 38 (UBC38), found in Arabidopsis thaliana (Mouse-ear cress).